The following is a 183-amino-acid chain: Putative 3-methyladenine DNA glycosylase (183 aa).

Belongs to the DNA glycosylase MPG family.

This Rickettsia rickettsii (strain Iowa) protein is Putative 3-methyladenine DNA glycosylase.